A 248-amino-acid polypeptide reads, in one-letter code: Small ribosomal subunit protein eS1 (248 aa).

The disordered stretch occupies residues 1–21 (MAVGKDKRISKGKKGGKKKIV).

This sequence belongs to the eukaryotic ribosomal protein eS1 family. As to quaternary structure, component of the small ribosomal subunit. Mature ribosomes consist of a small (40S) and a large (60S) subunit. The 40S subunit contains about 33 different proteins and 1 molecule of RNA (18S). The 60S subunit contains about 49 different proteins and 3 molecules of RNA (25S, 5.8S and 5S).

Its subcellular location is the cytoplasm. The sequence is that of Small ribosomal subunit protein eS1 from Syntrichia ruralis (Great hairy screw-moss).